We begin with the raw amino-acid sequence, 205 residues long: Protein GrpE (205 aa).

Belongs to the GrpE family. As to quaternary structure, homodimer.

It is found in the cytoplasm. Its function is as follows. Participates actively in the response to hyperosmotic and heat shock by preventing the aggregation of stress-denatured proteins, in association with DnaK and GrpE. It is the nucleotide exchange factor for DnaK and may function as a thermosensor. Unfolded proteins bind initially to DnaJ; upon interaction with the DnaJ-bound protein, DnaK hydrolyzes its bound ATP, resulting in the formation of a stable complex. GrpE releases ADP from DnaK; ATP binding to DnaK triggers the release of the substrate protein, thus completing the reaction cycle. Several rounds of ATP-dependent interactions between DnaJ, DnaK and GrpE are required for fully efficient folding. The polypeptide is Protein GrpE (Shewanella loihica (strain ATCC BAA-1088 / PV-4)).